Here is a 2711-residue protein sequence, read N- to C-terminus: Chromodomain-helicase-DNA-binding protein 6 (2711 aa).

Basic and acidic residues-rich tracts occupy residues 1–12, 100–115, 122–151, and 158–171; these read MKMKIQKKEKQL, EPGEQEGTKGSKDREP, EPKEPKEPRRAKEPKRAKEPKETKQKDGVK, and EASGTKEGKEKRSC. Disordered regions lie at residues 1 to 52 and 66 to 243; these read MKMK…EEAA and EEAD…QVKR. A required for DNA-dependent ATPase activity region spans residues 1–746; the sequence is MKMKIQKKEK…MMELRKCCNH (746 aa). Residues 214 to 224 show a composition bias toward low complexity; that stretch reads SLPNPSLQSPE. Chromo domains are found at residues 291–342 and 374–438; these read NIIE…KDPR and IEID…KHVE. A Helicase ATP-binding domain is found at 472–646; it reads LFNWYNRKNC…FSLLNFLEPS (175 aa). 485–492 lines the ATP pocket; it reads DEMGLGKT. Residues 597–600 carry the DEAH box motif; sequence DEAH. Positions 786-955 constitute a Helicase C-terminal domain; that stretch reads LIDKLLPKLI…LSKMEVEDLL (170 aa). The tract at residues 1318-1389 is disordered; sequence SLSAEQGVTD…SDPDKSPWPV (72 aa). Positions 1320 to 1329 are enriched in polar residues; sequence SAEQGVTDGT. Over residues 1332–1350 the composition is skewed to basic and acidic residues; it reads IPERGNIDKEDSAEDKLDG. One can recognise a Myb-like domain in the interval 1448 to 1502; it reads RWTRREQADFYRTVSSFGVVYDQEKKAFDWTQFRIISRLDKKSDESLEHYFYSFV. Ser1865 bears the Phosphoserine mark. Disordered regions lie at residues 1951 to 1978, 1997 to 2059, 2124 to 2147, 2321 to 2350, 2373 to 2419, 2550 to 2602, and 2641 to 2711; these read SEDSEVEKPKAYQPDLYRSKANNSTVEG, EPWK…ASGI, LPTPVLSSSAGSRSSLSEPEATEH, TTLSTTHPEVPGATSSAPEPTAAASSQAEK, GFGT…RGFL, SASL…ITTS, and RHSE…EDTN. Positions 2017–2036 are enriched in basic and acidic residues; that stretch reads SEPKPEDMDFENKDDYEKDG. Low complexity-rich tracts occupy residues 2130–2140 and 2333–2349; these read SSSAGSRSSLS and ATSSAPEPTAAASSQAE. Over residues 2550–2563 the composition is skewed to low complexity; the sequence is SASLASTKSGTSAT. Over residues 2565 to 2586 the composition is skewed to basic and acidic residues; the sequence is KSTEDKLSGHDVNTDALVDDKP. Composition is skewed to polar residues over residues 2591 to 2602 and 2677 to 2688; these read FSDQSEPTITTS and SDQNCTESSATV. The segment covering 2690 to 2711 has biased composition (basic and acidic residues); it reads PEREHVAQAREEGLKDSNEDTN.

The protein belongs to the SNF2/RAD54 helicase family. As to quaternary structure, interacts with NFE2L2; involved in activation of the transcription. Widely expressed.

Its subcellular location is the nucleus. The protein resides in the nucleoplasm. The catalysed reaction is ATP + H2O = ADP + phosphate + H(+). Functionally, ATP-dependent chromatin-remodeling factor. Regulates transcription by disrupting nucleosomes in a largely non-sliding manner which strongly increases the accessibility of chromatin. Activates transcription of specific genes in response to oxidative stress through interaction with NFE2L2. This is Chromodomain-helicase-DNA-binding protein 6 (Chd6) from Mus musculus (Mouse).